A 161-amino-acid chain; its full sequence is MPSFDVVSEVDKHELTNAVDQANRELDTRFDFKGVQAKFELEDGKVINQSAPSDFQIKQMTDILRARLLARGIDIRCLEFGEVETNLAGARQKVTVKQGIEQKQAKQLVAKLKEAKLKVEAQINGDKLRVTGKKRDDLQDAIALLKKADFELPLQFDNFRD.

This sequence belongs to the YajQ family.

In terms of biological role, nucleotide-binding protein. The protein is Nucleotide-binding protein XCV3791 of Xanthomonas euvesicatoria pv. vesicatoria (strain 85-10) (Xanthomonas campestris pv. vesicatoria).